Reading from the N-terminus, the 407-residue chain is Substance-P receptor (407 aa).

Positions 1 to 20 (MDNVLPVDSDLFPNTSTNTS) are disordered. The Extracellular segment spans residues 1–31 (MDNVLPVDSDLFPNTSTNTSESNQFVQPTWQ). N-linked (GlcNAc...) asparagine glycans are attached at residues N14 and N18. Residues 32-54 (IVLWAAAYTVIVVTSVVGNVVVI) traverse the membrane as a helical segment. Over 55–64 (WIILAHKRMR) the chain is Cytoplasmic. Residues 65–86 (TVTNYFLVNLAFAEACMAAFNT) traverse the membrane as a helical segment. Residues 87-106 (VVNFTYAVHNVWYYGLFYCK) lie on the Extracellular side of the membrane. An intrachain disulfide couples C105 to C180. A helical membrane pass occupies residues 107–128 (FHNFFPIAALFASIYSMTAVAF). Residues 129–148 (DRYMAIIHPLQPRLSATATK) are Cytoplasmic-facing. The chain crosses the membrane as a helical span at residues 149–169 (VVIFVIWVLALLLAFPQGYYS). The Extracellular segment spans residues 170–194 (TTETMPSRVVCMIEWPEHPNRTYEK). The chain crosses the membrane as a helical span at residues 195-219 (AYHICVTVLIYFLPLLVIGYAYTVV). At 220-248 (GITLWASEIPGDSSDRYHEQVSAKRKVVK) the chain is on the cytoplasmic side. The helical transmembrane segment at 249–270 (MMIVVVCTFAICWLPFHIFFLL) threads the bilayer. At 271-283 (PYINPDLYLKKFI) the chain is on the extracellular side. Residues 284 to 308 (QQVYLASMWLAMSSTMYNPIIYCCL) traverse the membrane as a helical segment. Residues 309 to 407 (NDRFRLGFKH…SSSFYSNMLA (99 aa)) lie on the Cytoplasmic side of the membrane. C322 is lipidated: S-palmitoyl cysteine. The disordered stretch occupies residues 362–407 (VGAHEDEPEEGPKATPSSLDLTSNGSSRSNSKTMTESSSFYSNMLA). Residues 376–407 (TPSSLDLTSNGSSRSNSKTMTESSSFYSNMLA) are compositionally biased toward polar residues.

It belongs to the G-protein coupled receptor 1 family. As to quaternary structure, interacts with ARRB1.

Its subcellular location is the cell membrane. In terms of biological role, this is a receptor for the tachykinin neuropeptide substance P. It is probably associated with G proteins that activate a phosphatidylinositol-calcium second messenger system. The rank order of affinity of this receptor to tachykinins is: substance P &gt; substance K &gt; neuromedin K. In Mus musculus (Mouse), this protein is Substance-P receptor (Tacr1).